We begin with the raw amino-acid sequence, 282 residues long: MIYETAPAKINLTLDTLFKRDDGFHEVEMIMTTIDLNDRLSFELRKDKKIVVDVEQTYVPSDNKNLAYKAAELMKKTYNLQQGLTITIDKNIPVSAGLAGGSTDAAATMRGMNRLYKLNRPLEELCALGIQIGTDIPFCILGKTALCKGKGEIIEYLDKPPSAWVVVAKPDLGISSPDIFKKLDLTQPHTVHTEACENALISGDYEQLCKSLSNRLEPVSGKMHDEILKIKANMLENGADGAVMSGSGPTVYALARKERQARHIYNAVNGCCNEVHIVRLLG.

Residue Lys-9 is part of the active site. An ATP-binding site is contributed by 93–103; sequence PVSAGLAGGST. Asp-135 is a catalytic residue.

This sequence belongs to the GHMP kinase family. IspE subfamily.

It carries out the reaction 4-CDP-2-C-methyl-D-erythritol + ATP = 4-CDP-2-C-methyl-D-erythritol 2-phosphate + ADP + H(+). Its function is as follows. Catalyzes the phosphorylation of the position 2 hydroxy group of 4-diphosphocytidyl-2C-methyl-D-erythritol. This chain is Putative 4-diphosphocytidyl-2-C-methyl-D-erythritol kinase, found in Staphylococcus saprophyticus subsp. saprophyticus (strain ATCC 15305 / DSM 20229 / NCIMB 8711 / NCTC 7292 / S-41).